The chain runs to 49 residues: Osteocalcin (49 aa).

The residue at position 1 (Q1) is a Pyrrolidone carboxylic acid. Residues 1–47 (QLINGQGAPAPYPDPLEPKREVCELNPDCDELADQVGLQDAYQRFYG) form the Gla domain. P9 bears the 4-hydroxyproline mark. E17, E21, E24, and D30 together coordinate Ca(2+). E17, E21, and E24 each carry 4-carboxyglutamate. An intrachain disulfide couples C23 to C29.

The protein belongs to the osteocalcin/matrix Gla protein family. In terms of processing, gamma-carboxyglutamate residues are formed by vitamin K dependent carboxylation by GGCX. These residues are essential for the binding of calcium. Decarboxylation promotes the hormone activity.

The protein localises to the secreted. In terms of biological role, the carboxylated form is one of the main organic components of the bone matrix, which constitutes 1-2% of the total bone protein: it acts as a negative regulator of bone formation and is required to limit bone formation without impairing bone resorption or mineralization. The carboxylated form binds strongly to apatite and calcium. Its function is as follows. The uncarboxylated form acts as a hormone secreted by osteoblasts, which regulates different cellular processes, such as energy metabolism, male fertility and brain development. Regulates of energy metabolism by acting as a hormone favoring pancreatic beta-cell proliferation, insulin secretion and sensitivity and energy expenditure. Uncarboxylated osteocalcin hormone also promotes testosterone production in the testes: acts as a ligand for G protein-coupled receptor GPRC6A at the surface of Leydig cells, initiating a signaling response that promotes the expression of enzymes required for testosterone synthesis in a CREB-dependent manner. Also acts as a regulator of brain development: osteocalcin hormone crosses the blood-brain barrier and acts as a ligand for GPR158 on neurons, initiating a signaling response that prevents neuronal apoptosis in the hippocampus, favors the synthesis of all monoamine neurotransmitters and inhibits that of gamma-aminobutyric acid (GABA). Osteocalcin also crosses the placenta during pregnancy and maternal osteocalcin is required for fetal brain development. The protein is Osteocalcin (BGLAP) of Oryctolagus cuniculus (Rabbit).